The primary structure comprises 134 residues: NADH-quinone oxidoreductase subunit A (134 aa).

Helical transmembrane passes span 14–34, 66–86, and 96–116; these read FFMF…LSWI, FYLI…LYAW, and IGFS…FYLV.

This sequence belongs to the complex I subunit 3 family. NDH-1 is composed of 13 different subunits. Subunits NuoA, H, J, K, L, M, N constitute the membrane sector of the complex.

It is found in the cell membrane. It carries out the reaction a quinone + NADH + 5 H(+)(in) = a quinol + NAD(+) + 4 H(+)(out). NDH-1 shuttles electrons from NADH, via FMN and iron-sulfur (Fe-S) centers, to quinones in the respiratory chain. The immediate electron acceptor for the enzyme in this species is believed to be ubiquinone. Couples the redox reaction to proton translocation (for every two electrons transferred, four hydrogen ions are translocated across the cytoplasmic membrane), and thus conserves the redox energy in a proton gradient. The polypeptide is NADH-quinone oxidoreductase subunit A (Buchnera aphidicola subsp. Acyrthosiphon pisum (strain APS) (Acyrthosiphon pisum symbiotic bacterium)).